Consider the following 419-residue polypeptide: Gamma-glutamyl phosphate reductase (419 aa).

It belongs to the gamma-glutamyl phosphate reductase family.

The protein resides in the cytoplasm. It carries out the reaction L-glutamate 5-semialdehyde + phosphate + NADP(+) = L-glutamyl 5-phosphate + NADPH + H(+). It participates in amino-acid biosynthesis; L-proline biosynthesis; L-glutamate 5-semialdehyde from L-glutamate: step 2/2. Catalyzes the NADPH-dependent reduction of L-glutamate 5-phosphate into L-glutamate 5-semialdehyde and phosphate. The product spontaneously undergoes cyclization to form 1-pyrroline-5-carboxylate. The polypeptide is Gamma-glutamyl phosphate reductase (Marinomonas sp. (strain MWYL1)).